A 904-amino-acid polypeptide reads, in one-letter code: Disintegrin and metalloproteinase domain-containing protein 22 (904 aa).

A signal peptide spans 1 to 23; the sequence is MQAAAAASFWLLCVLGTCPLARC. Positions 24 to 223 are excised as a propeptide; that stretch reads GRAGVASLKG…LKPRLKRRKR (200 aa). Topologically, residues 24–734 are extracellular; that stretch reads GRAGVASLKG…LSGNGVAGTN (711 aa). N-linked (GlcNAc...) asparagine glycosylation occurs at Asn163. The Peptidase M12B domain occupies 237-436; it reads KYIELMIVND…GGGACLFNKP (200 aa). Intrachain disulfides connect Cys347–Cys431, Cys390–Cys415, Cys392–Cys399, Cys445–Cys475, Cys456–Cys472, Cys458–Cys464, Cys471–Cys492, Cys483–Cys489, Cys488–Cys514, Cys501–Cys521, Cys508–Cys540, Cys533–Cys545, Cys552–Cys603, Cys567–Cys633, Cys581–Cys591, Cys598–Cys661, and Cys655–Cys666. One can recognise a Disintegrin domain in the interval 442-529; that stretch reads PPECGNGFIE…QCAPNVHKMD (88 aa). N-linked (GlcNAc...) asparagine glycosylation is present at Asn517. N-linked (GlcNAc...) asparagine glycosylation occurs at Asn632. Residue Asn673 is glycosylated (N-linked (GlcNAc...) asparagine). Residues 673 to 710 form the EGF-like domain; the sequence is NFSTCSSSKAGTVCSGNGVCSNELKCVCNRHWTGADCG. Disulfide bonds link Cys677/Cys692, Cys686/Cys698, and Cys700/Cys709. The helical transmembrane segment at 735–755 threads the bilayer; that stretch reads IIIGIIAGTILVLALILGITA. The Cytoplasmic segment spans residues 756-857; the sequence is WGYKNYREQR…RFRPRSNSTE (102 aa). Positions 769–904 are disordered; it reads QGDYVKKPGD…QSARLWETSI (136 aa). Positions 789-808 are enriched in low complexity; that stretch reads GGSTNSASSSKKRSNGLSHS. A phosphoserine mark is found at Ser808, Lys817, and Ser832. Residues 809–827 show a composition bias toward basic and acidic residues; sequence WSERIPDTKHISDICENGR. Over residues 840-851 the composition is skewed to basic residues; sequence NKKKIRGKRFRP. Phosphoserine occurs at positions 855, 860, 864, 868, and 882. The span at 860–875 shows a compositional bias: low complexity; that stretch reads SPAKSPSSSTGSIASS.

Interacts with LGI1. Can bind to LGI4. Interacts with KCNA2, DLG2 and DLG4. Interacts with ADAM11. Interacts (via C-terminus) with YWHAB/14-3-3 beta. Interacts (via C-terminus) with YWHAZ/14-3-3 zeta. Post-translationally, the precursor is cleaved by a furin endopeptidase. As to expression, detected in juxtaparanodal zones in the central nervous system and at nerve terminal plexuses of basket cells in the cerebellum (at protein level). Expressed at high levels in the brain. Strongly expressed in cerebellar granule cells and hippocampus. In spinal cord, expression is restricted to gray matter.

Its subcellular location is the cell membrane. The protein resides in the cell projection. The protein localises to the axon. Functionally, probable ligand for integrin in the brain. This is a non catalytic metalloprotease-like protein. Involved in regulation of cell adhesion and spreading and in inhibition of cell proliferation. Neuronal receptor for LGI1. This is Disintegrin and metalloproteinase domain-containing protein 22 (Adam22) from Mus musculus (Mouse).